The following is a 382-amino-acid chain: Anhydro-N-acetylmuramic acid kinase (382 aa).

Residue 9 to 16 participates in ATP binding; sequence GTSLDGID.

Belongs to the anhydro-N-acetylmuramic acid kinase family.

The enzyme catalyses 1,6-anhydro-N-acetyl-beta-muramate + ATP + H2O = N-acetyl-D-muramate 6-phosphate + ADP + H(+). It functions in the pathway amino-sugar metabolism; 1,6-anhydro-N-acetylmuramate degradation. Its pathway is cell wall biogenesis; peptidoglycan recycling. Catalyzes the specific phosphorylation of 1,6-anhydro-N-acetylmuramic acid (anhMurNAc) with the simultaneous cleavage of the 1,6-anhydro ring, generating MurNAc-6-P. Is required for the utilization of anhMurNAc either imported from the medium or derived from its own cell wall murein, and thus plays a role in cell wall recycling. This chain is Anhydro-N-acetylmuramic acid kinase, found in Bacillus cereus (strain 03BB102).